The following is a 429-amino-acid chain: 3-phosphoshikimate 1-carboxyvinyltransferase (429 aa).

3-phosphoshikimate-binding residues include Lys23, Ser24, and Arg28. Lys23 contacts phosphoenolpyruvate. Gly95 and Arg123 together coordinate phosphoenolpyruvate. 3-phosphoshikimate contacts are provided by Ser168, Gln170, Asp316, and Lys343. Position 170 (Gln170) interacts with phosphoenolpyruvate. The Proton acceptor role is filled by Asp316. The phosphoenolpyruvate site is built by Arg347 and Arg389.

This sequence belongs to the EPSP synthase family. As to quaternary structure, monomer.

It localises to the cytoplasm. The enzyme catalyses 3-phosphoshikimate + phosphoenolpyruvate = 5-O-(1-carboxyvinyl)-3-phosphoshikimate + phosphate. The protein operates within metabolic intermediate biosynthesis; chorismate biosynthesis; chorismate from D-erythrose 4-phosphate and phosphoenolpyruvate: step 6/7. In terms of biological role, catalyzes the transfer of the enolpyruvyl moiety of phosphoenolpyruvate (PEP) to the 5-hydroxyl of shikimate-3-phosphate (S3P) to produce enolpyruvyl shikimate-3-phosphate and inorganic phosphate. The chain is 3-phosphoshikimate 1-carboxyvinyltransferase from Bacillus cereus (strain ATCC 10987 / NRS 248).